Consider the following 1111-residue polypeptide: Receptor-type guanylate cyclase gcy-14 (1111 aa).

The N-terminal stretch at 1–14 is a signal peptide; sequence MCLFLLLFPYLASG. Over 15–473 the chain is Extracellular; it reads QFLQTVKVGL…ECPPDFVKEY (459 aa). Residues Asn-65, Asn-130, Asn-318, Asn-340, Asn-365, and Asn-379 are each glycosylated (N-linked (GlcNAc...) asparagine). The chain crosses the membrane as a helical span at residues 474–494; the sequence is LVYTIIAAVIVVLALLAGCAG. The 336-residue stretch at 482-817 folds into the Protein kinase domain; it reads VIVVLALLAG…KSNLMDHVFN (336 aa). Residues 488 to 496 and Lys-545 contribute to the ATP site; that span reads LLAGCAGLL. Residues 495-1111 lie on the Cytoplasmic side of the membrane; it reads LLYTMQMKRK…DFNNGNECVS (617 aa). The Guanylate cyclase domain maps to 875 to 1005; the sequence is TIFFSDVVQF…DAVNTASRME (131 aa). Positions 1061–1082 are disordered; the sequence is SAQAPREKTPEPPRRQSVRSIS. Positions 1065–1074 are enriched in basic and acidic residues; the sequence is PREKTPEPPR.

It belongs to the adenylyl cyclase class-4/guanylyl cyclase family. As to quaternary structure, homodimer. Expressed asymmetrically in ASEL sensory neuron.

The protein resides in the cell membrane. The protein localises to the cell projection. Its subcellular location is the cilium. The enzyme catalyses GTP = 3',5'-cyclic GMP + diphosphate. In terms of biological role, guanylate cyclase involved in the production of the second messenger cGMP. Regulates chemotaxis responses toward Na(1+) and Li(1+) salt ions and alkaline pH in ASE left (ASEL) sensory neuron. Directly senses environmental alkalinity in ASEL neuron which probably leads to the activation of cGMP-gated cation channel tax2/tax4. In Caenorhabditis elegans, this protein is Receptor-type guanylate cyclase gcy-14.